Here is a 281-residue protein sequence, read N- to C-terminus: NAD kinase (281 aa).

Asp66 functions as the Proton acceptor in the catalytic mechanism. Residues 66–67 (DG), 137–138 (ND), Arg148, Arg165, Asp167, and 178–183 (TAYSMS) each bind NAD(+).

It belongs to the NAD kinase family. A divalent metal cation serves as cofactor.

It localises to the cytoplasm. The enzyme catalyses NAD(+) + ATP = ADP + NADP(+) + H(+). In terms of biological role, involved in the regulation of the intracellular balance of NAD and NADP, and is a key enzyme in the biosynthesis of NADP. Catalyzes specifically the phosphorylation on 2'-hydroxyl of the adenosine moiety of NAD to yield NADP. The chain is NAD kinase from Chlorobium phaeovibrioides (strain DSM 265 / 1930) (Prosthecochloris vibrioformis (strain DSM 265)).